The chain runs to 645 residues: Translation factor GUF1 homolog, mitochondrial (645 aa).

Residues 40–215 (DKIRNFGIVA…AIIDRVPAPT (176 aa)) form the tr-type G domain. GTP is bound by residues 49-56 (AHVDHGKS), 108-112 (DTPGH), and 162-165 (NKID).

It belongs to the TRAFAC class translation factor GTPase superfamily. Classic translation factor GTPase family. LepA subfamily.

Its subcellular location is the mitochondrion inner membrane. The enzyme catalyses GTP + H2O = GDP + phosphate + H(+). Promotes mitochondrial protein synthesis. May act as a fidelity factor of the translation reaction, by catalyzing a one-codon backward translocation of tRNAs on improperly translocated ribosomes. Binds to mitochondrial ribosomes in a GTP-dependent manner. This Caenorhabditis elegans protein is Translation factor GUF1 homolog, mitochondrial.